The following is a 325-amino-acid chain: GMP reductase (325 aa).

Cys173 serves as the catalytic Thioimidate intermediate. Position 202 to 225 (202 to 225 (IIADGGIRSHGDIAKSVRFGATMV)) interacts with NADP(+).

This sequence belongs to the IMPDH/GMPR family. GuaC type 2 subfamily.

The catalysed reaction is IMP + NH4(+) + NADP(+) = GMP + NADPH + 2 H(+). Functionally, catalyzes the irreversible NADPH-dependent deamination of GMP to IMP. It functions in the conversion of nucleobase, nucleoside and nucleotide derivatives of G to A nucleotides, and in maintaining the intracellular balance of A and G nucleotides. The sequence is that of GMP reductase from Acidovorax ebreus (strain TPSY) (Diaphorobacter sp. (strain TPSY)).